The following is a 195-amino-acid chain: ATP-dependent Clp protease proteolytic subunit (195 aa).

Ser98 acts as the Nucleophile in catalysis. Residue His123 is part of the active site.

The protein belongs to the peptidase S14 family. In terms of assembly, fourteen ClpP subunits assemble into 2 heptameric rings which stack back to back to give a disk-like structure with a central cavity, resembling the structure of eukaryotic proteasomes.

The protein localises to the cytoplasm. It carries out the reaction Hydrolysis of proteins to small peptides in the presence of ATP and magnesium. alpha-casein is the usual test substrate. In the absence of ATP, only oligopeptides shorter than five residues are hydrolyzed (such as succinyl-Leu-Tyr-|-NHMec, and Leu-Tyr-Leu-|-Tyr-Trp, in which cleavage of the -Tyr-|-Leu- and -Tyr-|-Trp bonds also occurs).. Functionally, cleaves peptides in various proteins in a process that requires ATP hydrolysis. Has a chymotrypsin-like activity. Plays a major role in the degradation of misfolded proteins. The polypeptide is ATP-dependent Clp protease proteolytic subunit (Thermoanaerobacter pseudethanolicus (strain ATCC 33223 / 39E) (Clostridium thermohydrosulfuricum)).